Reading from the N-terminus, the 475-residue chain is Protein nucleotidyltransferase YdiU (475 aa).

Positions 82, 84, 85, 105, 117, 118, 168, and 175 each coordinate ATP. The Proton acceptor role is filled by Asp-240. Asn-241 and Asp-250 together coordinate Mg(2+). Asp-250 contacts ATP.

Belongs to the SELO family. Mg(2+) is required as a cofactor. The cofactor is Mn(2+).

It carries out the reaction L-seryl-[protein] + ATP = 3-O-(5'-adenylyl)-L-seryl-[protein] + diphosphate. The catalysed reaction is L-threonyl-[protein] + ATP = 3-O-(5'-adenylyl)-L-threonyl-[protein] + diphosphate. The enzyme catalyses L-tyrosyl-[protein] + ATP = O-(5'-adenylyl)-L-tyrosyl-[protein] + diphosphate. It catalyses the reaction L-histidyl-[protein] + UTP = N(tele)-(5'-uridylyl)-L-histidyl-[protein] + diphosphate. It carries out the reaction L-seryl-[protein] + UTP = O-(5'-uridylyl)-L-seryl-[protein] + diphosphate. The catalysed reaction is L-tyrosyl-[protein] + UTP = O-(5'-uridylyl)-L-tyrosyl-[protein] + diphosphate. Nucleotidyltransferase involved in the post-translational modification of proteins. It can catalyze the addition of adenosine monophosphate (AMP) or uridine monophosphate (UMP) to a protein, resulting in modifications known as AMPylation and UMPylation. This Aeromonas salmonicida (strain A449) protein is Protein nucleotidyltransferase YdiU.